A 792-amino-acid chain; its full sequence is Endonuclease MutS2 (792 aa).

334 to 341 (GPNTGGKT) is a binding site for ATP. In terms of domain architecture, Smr spans 717–792 (IDLRGMMLSE…ENGVTVVELK (76 aa)).

Belongs to the DNA mismatch repair MutS family. MutS2 subfamily. As to quaternary structure, homodimer. Binds to stalled ribosomes, contacting rRNA.

Its function is as follows. Endonuclease that is involved in the suppression of homologous recombination and thus may have a key role in the control of bacterial genetic diversity. Acts as a ribosome collision sensor, splitting the ribosome into its 2 subunits. Detects stalled/collided 70S ribosomes which it binds and splits by an ATP-hydrolysis driven conformational change. Acts upstream of the ribosome quality control system (RQC), a ribosome-associated complex that mediates the extraction of incompletely synthesized nascent chains from stalled ribosomes and their subsequent degradation. Probably generates substrates for RQC. The sequence is that of Endonuclease MutS2 from Ruminiclostridium cellulolyticum (strain ATCC 35319 / DSM 5812 / JCM 6584 / H10) (Clostridium cellulolyticum).